The following is an 883-amino-acid chain: N,N'-diacetylchitobiase (883 aa).

The first 17 residues, 1–17, serve as a signal peptide directing secretion; that stretch reads MLKHSLIAASVITTLAG. Residue Cys18 is the site of N-palmitoyl cysteine attachment. Cys18 carries the S-diacylglycerol cysteine lipid modification. Cystine bridges form between Cys54-Cys64, Cys394-Cys402, and Cys502-Cys577. The active-site Proton donor is the Glu537.

The protein belongs to the glycosyl hydrolase 20 family. Post-translationally, this protein is probably a lipoprotein, its processing is inhibited by globomycin.

It localises to the cell outer membrane. It catalyses the reaction Hydrolysis of terminal non-reducing N-acetyl-D-hexosamine residues in N-acetyl-beta-D-hexosaminides.. It functions in the pathway glycan degradation; chitin degradation. In terms of biological role, hydrolysis of terminal, non-reducing N-acetyl-beta-D-glucosamine residues in chitobiose and higher analogs, and in glycoproteins. This is N,N'-diacetylchitobiase (chb) from Vibrio harveyi (Beneckea harveyi).